Consider the following 410-residue polypeptide: Probable protein S-acyltransferase 6 (410 aa).

A run of 2 helical transmembrane segments spans residues 45 to 65 (LGLT…FVAS) and 76 to 96 (GVSI…LLML). The tract at residues 108 to 129 (NSHPPEPEVVDGNTGSGTSQTP) is disordered. Residues 147-197 (KYCDTCMLYRPPRCSHCSICNNCVERFDHHCPWVGQCIAQRNYRFFFMFVF) form the DHHC domain. Cys177 acts as the S-palmitoyl cysteine intermediate in catalysis. 2 helical membrane passes run 191-211 (FFFM…AFCC) and 235-255 (SIAL…LTCF). Ser325 carries the post-translational modification Phosphoserine.

This sequence belongs to the DHHC palmitoyltransferase family.

It localises to the cell membrane. The enzyme catalyses L-cysteinyl-[protein] + hexadecanoyl-CoA = S-hexadecanoyl-L-cysteinyl-[protein] + CoA. Functionally, palmitoyl acyltransferase. This chain is Probable protein S-acyltransferase 6 (PAT06), found in Arabidopsis thaliana (Mouse-ear cress).